The sequence spans 95 residues: Co-chaperonin GroES (95 aa).

The protein belongs to the GroES chaperonin family. In terms of assembly, heptamer of 7 subunits arranged in a ring. Interacts with the chaperonin GroEL.

Its subcellular location is the cytoplasm. Functionally, together with the chaperonin GroEL, plays an essential role in assisting protein folding. The GroEL-GroES system forms a nano-cage that allows encapsulation of the non-native substrate proteins and provides a physical environment optimized to promote and accelerate protein folding. GroES binds to the apical surface of the GroEL ring, thereby capping the opening of the GroEL channel. The chain is Co-chaperonin GroES from Streptococcus uberis (strain ATCC BAA-854 / 0140J).